The sequence spans 544 residues: Chaperonin GroEL 2 (544 aa).

Residues T29–P32, D86–T90, G413, N479–A481, and D495 each bind ATP.

It belongs to the chaperonin (HSP60) family. In terms of assembly, forms a cylinder of 14 subunits composed of two heptameric rings stacked back-to-back. Interacts with the co-chaperonin GroES.

The protein localises to the cytoplasm. It catalyses the reaction ATP + H2O + a folded polypeptide = ADP + phosphate + an unfolded polypeptide.. Together with its co-chaperonin GroES, plays an essential role in assisting protein folding. The GroEL-GroES system forms a nano-cage that allows encapsulation of the non-native substrate proteins and provides a physical environment optimized to promote and accelerate protein folding. This Prochlorococcus marinus subsp. pastoris (strain CCMP1986 / NIES-2087 / MED4) protein is Chaperonin GroEL 2.